We begin with the raw amino-acid sequence, 372 residues long: Rab9 effector protein with kelch motifs (372 aa).

Kelch repeat units lie at residues 49-95 (KVFI…FIPS), 100-146 (RIWV…TSSA), 151-200 (QLYV…VMVA), 204-250 (KLFI…SAVA), and 254-303 (HVYI…IIPW). Ser133 is modified (phosphoserine). Residues 314-340 (SNSLTLNHEAEKEDSADKVMSHSGDSH) form a disordered region. The span at 321–340 (HEAEKEDSADKVMSHSGDSH) shows a compositional bias: basic and acidic residues.

Interacts with PIKFYVE; the interaction recruits RABEPK to the endosomal membrane. Interacts with RAB9 in its GTP-bound conformation. Post-translationally, phosphorylated on Ser residues by PIKFYVE.

It localises to the cytoplasm. Its subcellular location is the endosome membrane. Rab9 effector required for endosome to trans-Golgi network (TGN) transport. In Homo sapiens (Human), this protein is Rab9 effector protein with kelch motifs.